The chain runs to 81 residues: uncharacterized protein (81 aa).

2 helical membrane passes run 27–47 (ASLLFFGQTILFVFLSYLNLT) and 54–74 (IFGAYLTIFFAGFTYYSIFIM).

It localises to the cell membrane. This is an uncharacterized protein from Bacillus subtilis (strain 168).